We begin with the raw amino-acid sequence, 147 residues long: Large ribosomal subunit protein uL13 (147 aa).

Belongs to the universal ribosomal protein uL13 family. In terms of assembly, part of the 50S ribosomal subunit.

This protein is one of the early assembly proteins of the 50S ribosomal subunit, although it is not seen to bind rRNA by itself. It is important during the early stages of 50S assembly. In Kocuria rhizophila (strain ATCC 9341 / DSM 348 / NBRC 103217 / DC2201), this protein is Large ribosomal subunit protein uL13.